Here is a 551-residue protein sequence, read N- to C-terminus: Glucans biosynthesis protein D (551 aa).

Residues Met1–Ala32 constitute a signal peptide (tat-type signal).

Belongs to the OpgD/OpgG family. In terms of processing, predicted to be exported by the Tat system. The position of the signal peptide cleavage has not been experimentally proven.

Its subcellular location is the periplasm. It functions in the pathway glycan metabolism; osmoregulated periplasmic glucan (OPG) biosynthesis. Its function is as follows. Probably involved in the control of the structural glucose backbone of osmoregulated periplasmic glucans (OPGs). This chain is Glucans biosynthesis protein D, found in Shigella dysenteriae serotype 1 (strain Sd197).